Consider the following 112-residue polypeptide: Protein lin-52 homolog (112 aa).

It belongs to the lin-52 family. As to quaternary structure, component of the DREAM complex.

This Danio rerio (Zebrafish) protein is Protein lin-52 homolog (lin52).